Reading from the N-terminus, the 62-residue chain is uncharacterized protein (62 aa).

4Fe-4S ferredoxin-type domains follow at residues 2-31 and 32-62; these read AVTIDYSLCKGAECAECVNNCPMEVFEIEG and DKVVVARPDDCTYCGVCEDVCPTGAVKVEPE. Positions 10, 15, 18, 22, 42, 45, 48, and 52 each coordinate [4Fe-4S] cluster.

Requires [4Fe-4S] cluster as cofactor.

This is an uncharacterized protein from Methanocaldococcus jannaschii (strain ATCC 43067 / DSM 2661 / JAL-1 / JCM 10045 / NBRC 100440) (Methanococcus jannaschii).